We begin with the raw amino-acid sequence, 430 residues long: Probable sugar isomerase mlr5709 (430 aa).

3 residues coordinate Mn(2+): His257, Asp289, and Asp291.

Belongs to the rhamnose isomerase family. Mn(2+) is required as a cofactor.

The sequence is that of Probable sugar isomerase mlr5709 from Mesorhizobium japonicum (strain LMG 29417 / CECT 9101 / MAFF 303099) (Mesorhizobium loti (strain MAFF 303099)).